The following is a 127-amino-acid chain: Holo-[acyl-carrier-protein] synthase (127 aa).

Mg(2+) is bound by residues Asp-8 and Glu-57.

This sequence belongs to the P-Pant transferase superfamily. AcpS family. Mg(2+) serves as cofactor.

The protein resides in the cytoplasm. The enzyme catalyses apo-[ACP] + CoA = holo-[ACP] + adenosine 3',5'-bisphosphate + H(+). Its function is as follows. Transfers the 4'-phosphopantetheine moiety from coenzyme A to a Ser of acyl-carrier-protein. The protein is Holo-[acyl-carrier-protein] synthase of Hydrogenovibrio crunogenus (strain DSM 25203 / XCL-2) (Thiomicrospira crunogena).